Consider the following 221-residue polypeptide: Endo-1,4-beta-xylanase 2 (221 aa).

An N-terminal signal peptide occupies residues 1 to 19 (MVAFTSLLAGFAAIAGVLS). A GH11 domain is found at 32-221 (QTIGPGTGYS…SSGSASITVS (190 aa)). 2 N-linked (GlcNAc...) asparagine glycosylation sites follow: asparagine 69 and asparagine 92. The Nucleophile role is filled by glutamate 117. The active-site Proton donor is the glutamate 208.

The protein belongs to the glycosyl hydrolase 11 (cellulase G) family.

It is found in the secreted. The catalysed reaction is Endohydrolysis of (1-&gt;4)-beta-D-xylosidic linkages in xylans.. It functions in the pathway glycan degradation; xylan degradation. Endo-1,4-beta-xylanase involved in the hydrolysis of xylan, a major structural heterogeneous polysaccharide found in plant biomass representing the second most abundant polysaccharide in the biosphere, after cellulose. This is Endo-1,4-beta-xylanase 2 (Xyn2) from Trichoderma harzianum (Hypocrea lixii).